Reading from the N-terminus, the 212-residue chain is Urease accessory protein UreG (212 aa).

A GTP-binding site is contributed by 19-26; that stretch reads GPVGSGKT.

Belongs to the SIMIBI class G3E GTPase family. UreG subfamily. As to quaternary structure, homodimer. UreD, UreF and UreG form a complex that acts as a GTP-hydrolysis-dependent molecular chaperone, activating the urease apoprotein by helping to assemble the nickel containing metallocenter of UreC. The UreE protein probably delivers the nickel.

The protein resides in the cytoplasm. Facilitates the functional incorporation of the urease nickel metallocenter. This process requires GTP hydrolysis, probably effectuated by UreG. This is Urease accessory protein UreG from Vibrio parahaemolyticus.